Consider the following 394-residue polypeptide: Large ribosomal subunit protein bL27m (394 aa).

The N-terminal 34 residues, 1–34 (MSFIKQVGKLIRPNDYSSSIFQTSFLNNVIQVRT), are a transit peptide targeting the mitochondrion. Disordered stretches follow at residues 36–57 (TKRA…LGPK) and 145–181 (AEAE…QRAS). Over residues 145 to 170 (AEAEKEENHMSRKEFLQQPELEKTRQ) the composition is skewed to basic and acidic residues.

It belongs to the bacterial ribosomal protein bL27 family.

The protein localises to the mitochondrion. Component of the large subunit of mitochondrial ribosome. The protein is Large ribosomal subunit protein bL27m (MRPL2) of Debaryomyces hansenii (strain ATCC 36239 / CBS 767 / BCRC 21394 / JCM 1990 / NBRC 0083 / IGC 2968) (Yeast).